A 1134-amino-acid chain; its full sequence is DNA polymerase II large subunit (1134 aa).

It belongs to the archaeal DNA polymerase II family. Heterodimer of a large subunit and a small subunit.

It carries out the reaction DNA(n) + a 2'-deoxyribonucleoside 5'-triphosphate = DNA(n+1) + diphosphate. The catalysed reaction is Exonucleolytic cleavage in the 3'- to 5'-direction to yield nucleoside 5'-phosphates.. Functionally, possesses two activities: a DNA synthesis (polymerase) and an exonucleolytic activity that degrades single-stranded DNA in the 3'- to 5'-direction. Has a template-primer preference which is characteristic of a replicative DNA polymerase. The sequence is that of DNA polymerase II large subunit from Methanocella arvoryzae (strain DSM 22066 / NBRC 105507 / MRE50).